Reading from the N-terminus, the 320-residue chain is o-succinylbenzoate synthase (320 aa).

Catalysis depends on Lys-133, which acts as the Proton donor. Mg(2+)-binding residues include Asp-161, Glu-190, and Asp-213. The active-site Proton acceptor is Lys-235.

It belongs to the mandelate racemase/muconate lactonizing enzyme family. MenC type 1 subfamily. A divalent metal cation is required as a cofactor.

The enzyme catalyses (1R,6R)-6-hydroxy-2-succinyl-cyclohexa-2,4-diene-1-carboxylate = 2-succinylbenzoate + H2O. It participates in quinol/quinone metabolism; 1,4-dihydroxy-2-naphthoate biosynthesis; 1,4-dihydroxy-2-naphthoate from chorismate: step 4/7. It functions in the pathway quinol/quinone metabolism; menaquinone biosynthesis. In terms of biological role, converts 2-succinyl-6-hydroxy-2,4-cyclohexadiene-1-carboxylate (SHCHC) to 2-succinylbenzoate (OSB). This is o-succinylbenzoate synthase from Escherichia coli O6:H1 (strain CFT073 / ATCC 700928 / UPEC).